Here is a 764-residue protein sequence, read N- to C-terminus: 5-methyltetrahydropteroyltriglutamate--homocysteine methyltransferase (764 aa).

5-methyltetrahydropteroyltri-L-glutamate is bound by residues 16 to 19 and K121; that span reads RELK. L-homocysteine contacts are provided by residues 440–442 and E493; that span reads IGS. Residues 440–442 and E493 contribute to the L-methionine site; that span reads IGS. 5-methyltetrahydropteroyltri-L-glutamate contacts are provided by residues 524–525 and W570; that span reads RC. An L-homocysteine-binding site is contributed by D608. D608 contributes to the L-methionine binding site. E614 contributes to the 5-methyltetrahydropteroyltri-L-glutamate binding site. H650, C652, and E674 together coordinate Zn(2+). H703 acts as the Proton donor in catalysis. C735 lines the Zn(2+) pocket.

Belongs to the vitamin-B12 independent methionine synthase family. Zn(2+) serves as cofactor.

The enzyme catalyses 5-methyltetrahydropteroyltri-L-glutamate + L-homocysteine = tetrahydropteroyltri-L-glutamate + L-methionine. It functions in the pathway amino-acid biosynthesis; L-methionine biosynthesis via de novo pathway; L-methionine from L-homocysteine (MetE route): step 1/1. Functionally, catalyzes the transfer of a methyl group from 5-methyltetrahydrofolate to homocysteine resulting in methionine formation. The chain is 5-methyltetrahydropteroyltriglutamate--homocysteine methyltransferase from Burkholderia cenocepacia (strain HI2424).